The chain runs to 250 residues: tRNA (guanine-N(1)-)-methyltransferase (250 aa).

S-adenosyl-L-methionine is bound by residues Gly116 and 136 to 141 (IGDYVL).

The protein belongs to the RNA methyltransferase TrmD family. In terms of assembly, homodimer.

The protein localises to the cytoplasm. It catalyses the reaction guanosine(37) in tRNA + S-adenosyl-L-methionine = N(1)-methylguanosine(37) in tRNA + S-adenosyl-L-homocysteine + H(+). Specifically methylates guanosine-37 in various tRNAs. This chain is tRNA (guanine-N(1)-)-methyltransferase, found in Pseudomonas putida (strain GB-1).